A 96-amino-acid polypeptide reads, in one-letter code: Nucleoid-associated protein CCA_00330 (96 aa).

This sequence belongs to the YbaB/EbfC family. In terms of assembly, homodimer.

The protein resides in the cytoplasm. The protein localises to the nucleoid. Functionally, binds to DNA and alters its conformation. May be involved in regulation of gene expression, nucleoid organization and DNA protection. The protein is Nucleoid-associated protein CCA_00330 of Chlamydia caviae (strain ATCC VR-813 / DSM 19441 / 03DC25 / GPIC) (Chlamydophila caviae).